The sequence spans 340 residues: MYSLIRPLLMRMDAERSHEFSLAWMDRLARLGLGRLLCGHRLPDMPRRVMGLTFANPVGLAAGLDKNGEHLEALGHVGFGFIEVGTVTPRPQPGNPEPRLFRLPAHEAIINRMGFNNQGVDALVQRLRVTRYQGVLGVNIGKNKDTPTERATDDYLSCLQKVYPYADYVAVNVSSPNTPGLRDLQGGELLEALLGRLTHLRGVLAREYGRYVPLVVKIAPDMDEAQRAHFCQQVLRYGIDGVAATNTTLSRDGVEDDPLAREQGGLSGAPLRPRAQAVLEELGQRLGHRVPLIGVGGIMSGADAQARMAAGADLLQIYSGFIYRGPLLLEELLKAVAPEH.

FMN is bound by residues 62–66 (AGLDK) and T86. K66 lines the substrate pocket. A substrate-binding site is contributed by 111 to 115 (NRMGF). Residues N139 and N172 each coordinate FMN. N172 contributes to the substrate binding site. Catalysis depends on S175, which acts as the Nucleophile. Position 177 (N177) interacts with substrate. Residues K217 and T245 each coordinate FMN. A substrate-binding site is contributed by 246–247 (NT). FMN-binding positions include G268, G297, and 318–319 (YS).

It belongs to the dihydroorotate dehydrogenase family. Type 2 subfamily. As to quaternary structure, monomer. FMN serves as cofactor.

It localises to the cell membrane. The enzyme catalyses (S)-dihydroorotate + a quinone = orotate + a quinol. It participates in pyrimidine metabolism; UMP biosynthesis via de novo pathway; orotate from (S)-dihydroorotate (quinone route): step 1/1. In terms of biological role, catalyzes the conversion of dihydroorotate to orotate with quinone as electron acceptor. The chain is Dihydroorotate dehydrogenase (quinone) from Alkalilimnicola ehrlichii (strain ATCC BAA-1101 / DSM 17681 / MLHE-1).